A 78-amino-acid chain; its full sequence is Delta-conotoxin-like Ai6.1 (78 aa).

The signal sequence occupies residues 1–22 (MKLTCVMIVAVLFLTAWTFATA). A propeptide spanning residues 23–49 (DDPRNGLGNLFSNAHHEMKNPEASKLN) is cleaved from the precursor. 3 disulfide bridges follow: Cys53/Cys68, Cys60/Cys72, and Cys67/Cys77.

This sequence belongs to the conotoxin O1 superfamily. As to expression, expressed by the venom duct.

The protein localises to the secreted. In terms of biological role, delta-conotoxins bind to site 6 of voltage-gated sodium channels (Nav) and inhibit the inactivation process. This chain is Delta-conotoxin-like Ai6.1, found in Conus ammiralis (Admiral cone).